A 412-amino-acid polypeptide reads, in one-letter code: Gamma-glutamyl phosphate reductase (412 aa).

The protein belongs to the gamma-glutamyl phosphate reductase family.

The protein resides in the cytoplasm. It carries out the reaction L-glutamate 5-semialdehyde + phosphate + NADP(+) = L-glutamyl 5-phosphate + NADPH + H(+). It participates in amino-acid biosynthesis; L-proline biosynthesis; L-glutamate 5-semialdehyde from L-glutamate: step 2/2. Functionally, catalyzes the NADPH-dependent reduction of L-glutamate 5-phosphate into L-glutamate 5-semialdehyde and phosphate. The product spontaneously undergoes cyclization to form 1-pyrroline-5-carboxylate. The polypeptide is Gamma-glutamyl phosphate reductase (Nitratiruptor sp. (strain SB155-2)).